A 295-amino-acid polypeptide reads, in one-letter code: Bifunctional protein FolD (295 aa).

NADP(+) is bound by residues 165-167 (GRG), S192, and I233.

This sequence belongs to the tetrahydrofolate dehydrogenase/cyclohydrolase family. In terms of assembly, homodimer.

The catalysed reaction is (6R)-5,10-methylene-5,6,7,8-tetrahydrofolate + NADP(+) = (6R)-5,10-methenyltetrahydrofolate + NADPH. The enzyme catalyses (6R)-5,10-methenyltetrahydrofolate + H2O = (6R)-10-formyltetrahydrofolate + H(+). Its pathway is one-carbon metabolism; tetrahydrofolate interconversion. Functionally, catalyzes the oxidation of 5,10-methylenetetrahydrofolate to 5,10-methenyltetrahydrofolate and then the hydrolysis of 5,10-methenyltetrahydrofolate to 10-formyltetrahydrofolate. In Tropheryma whipplei (strain TW08/27) (Whipple's bacillus), this protein is Bifunctional protein FolD.